The primary structure comprises 291 residues: ATP synthase gamma chain (291 aa).

This sequence belongs to the ATPase gamma chain family. As to quaternary structure, F-type ATPases have 2 components, CF(1) - the catalytic core - and CF(0) - the membrane proton channel. CF(1) has five subunits: alpha(3), beta(3), gamma(1), delta(1), epsilon(1). CF(0) has three main subunits: a, b and c.

It is found in the cell membrane. Its function is as follows. Produces ATP from ADP in the presence of a proton gradient across the membrane. The gamma chain is believed to be important in regulating ATPase activity and the flow of protons through the CF(0) complex. The protein is ATP synthase gamma chain of Streptococcus equinus (Streptococcus bovis).